Reading from the N-terminus, the 24-residue chain is Heptapoietin A light chain (24 aa).

Heterodimer of a heavy and a light chain linked by disulfide bond(s).

Functionally, HPTA is an acidic heparin-binding growth factor for hepatocytes. This Oryctolagus cuniculus (Rabbit) protein is Heptapoietin A light chain.